A 378-amino-acid chain; its full sequence is Chaperone protein DnaJ (378 aa).

The J domain maps to 5–69 (EYYDRLGVSK…QKRAAYDQYG (65 aa)). The segment at 134-216 (GVEKEVSYNR…CHGTGHEKQA (83 aa)) adopts a CR-type zinc-finger fold. Zn(2+)-binding residues include Cys147, Cys150, Cys164, Cys167, Cys190, Cys193, Cys204, and Cys207. CXXCXGXG motif repeat units lie at residues 147-154 (CGTCLGSG), 164-171 (CRKCHGSG), 190-197 (CDICHGSG), and 204-211 (CQTCHGTG).

Belongs to the DnaJ family. Homodimer. The cofactor is Zn(2+).

It is found in the cytoplasm. In terms of biological role, participates actively in the response to hyperosmotic and heat shock by preventing the aggregation of stress-denatured proteins and by disaggregating proteins, also in an autonomous, DnaK-independent fashion. Unfolded proteins bind initially to DnaJ; upon interaction with the DnaJ-bound protein, DnaK hydrolyzes its bound ATP, resulting in the formation of a stable complex. GrpE releases ADP from DnaK; ATP binding to DnaK triggers the release of the substrate protein, thus completing the reaction cycle. Several rounds of ATP-dependent interactions between DnaJ, DnaK and GrpE are required for fully efficient folding. Also involved, together with DnaK and GrpE, in the DNA replication of plasmids through activation of initiation proteins. The sequence is that of Chaperone protein DnaJ from Streptococcus pyogenes.